A 184-amino-acid chain; its full sequence is Ribosome maturation factor RimM (184 aa).

Residues 101 to 180 (DGEFFYCDLV…KITTNNAKTL (80 aa)) enclose the PRC barrel domain.

The protein belongs to the RimM family. In terms of assembly, binds ribosomal protein uS19.

Its subcellular location is the cytoplasm. Functionally, an accessory protein needed during the final step in the assembly of 30S ribosomal subunit, possibly for assembly of the head region. Essential for efficient processing of 16S rRNA. May be needed both before and after RbfA during the maturation of 16S rRNA. It has affinity for free ribosomal 30S subunits but not for 70S ribosomes. The sequence is that of Ribosome maturation factor RimM from Helicobacter pylori (strain Shi470).